We begin with the raw amino-acid sequence, 296 residues long: Zinc finger protein 75A (296 aa).

Residues 1–66 form the KRAB domain; the sequence is MYFSQEEWEL…VSPEFKDSAG (66 aa). C2H2-type zinc fingers lie at residues 161–183, 189–211, 217–239, 245–267, and 273–295; these read FKCQECGKTFRVSSDLIKHQRIH, YKCQQCDKRFRWSSDLNKHLTTH, YKCSWCGKSFSQNTNLHTHQRTH, FTCHECGKKFSQNSHLIKHRRTH, and YTCSICRRNFSRRSSLLRHQKLH.

It belongs to the krueppel C2H2-type zinc-finger protein family.

Its subcellular location is the nucleus. May be involved in transcriptional regulation. In Homo sapiens (Human), this protein is Zinc finger protein 75A (ZNF75A).